The primary structure comprises 194 residues: Ion-translocating oxidoreductase complex subunit A (194 aa).

Transmembrane regions (helical) follow at residues 1–21, 48–68, 73–93, 103–123, 135–155, and 172–192; these read MVMH…FILV, CVIV…LIPF, LCTM…EIIV, LLGI…IPLM, VLYG…FSSI, and PIAL…DGLI.

This sequence belongs to the NqrDE/RnfAE family. As to quaternary structure, the complex is composed of six subunits: RnfA, RnfB, RnfC, RnfD, RnfE and RnfG.

The protein resides in the cell inner membrane. Its function is as follows. Part of a membrane-bound complex that couples electron transfer with translocation of ions across the membrane. The chain is Ion-translocating oxidoreductase complex subunit A from Buchnera aphidicola subsp. Baizongia pistaciae (strain Bp).